Here is a 478-residue protein sequence, read N- to C-terminus: MNFVIPSFIPAIPEIVLLTLTSLLLIADTIWSKRSEFATYYATQLILLVVGYLVLTSFSTSQVLTFDGSFVRDAFGDILKLVIVVVSMGIFLFSKEYLLQNKFYRGEYFTLGLFGVLGMFVMVSAYNLITMYLGLEIMSLALYAMVAMRKDNQHALEAAMKYFVLGALATGMLLYGFSMIYGATGSIQFDEMAQIIASGNVDNVVLSFGVVFIVIGLAFKLGAVPFHMWVPDVYHGAPTAVTLYIGTAPKIAAFAMLYRILVEGLPGLVEDWQSLIVMISVLSLIVGAVITLVQENLKRLLAYSGIGHIGFILLGIIAANPDGYSAAMFYTIVYSITALAGFGMIVALARTNNEFDLVADFKGMNKRNPWLALMMLFIMFSMAGIPPFVGFYAKVVVIEEVVQAGFTWLAVLAVVMAVISAFYYLRVVKVMYFDEPEDNTKIEPVSSQLNWAVSFVSIALLLLGLMPSSLITLCYNSL.

Transmembrane regions (helical) follow at residues 7-27 (SFIPAIPEIVLLTLTSLLLIA), 46-66 (ILLVVGYLVLTSFSTSQVLTF), 74-94 (AFGDILKLVIVVVSMGIFLFS), 109-129 (FTLGLFGVLGMFVMVSAYNLI), 163-183 (FVLGALATGMLLYGFSMIYGA), 204-224 (VVLSFGVVFIVIGLAFKLGAV), 237-257 (APTAVTLYIGTAPKIAAFAML), 273-293 (QSLIVMISVLSLIVGAVITLV), 300-320 (LLAYSGIGHIGFILLGIIAAN), 328-348 (MFYTIVYSITALAGFGMIVAL), 371-391 (LALMMLFIMFSMAGIPPFVGF), 405-425 (GFTWLAVLAVVMAVISAFYYL), and 451-471 (WAVSFVSIALLLLGLMPSSLI).

Belongs to the complex I subunit 2 family. As to quaternary structure, NDH-1 is composed of 14 different subunits. Subunits NuoA, H, J, K, L, M, N constitute the membrane sector of the complex.

It is found in the cell inner membrane. The catalysed reaction is a quinone + NADH + 5 H(+)(in) = a quinol + NAD(+) + 4 H(+)(out). Functionally, NDH-1 shuttles electrons from NADH, via FMN and iron-sulfur (Fe-S) centers, to quinones in the respiratory chain. The immediate electron acceptor for the enzyme in this species is believed to be ubiquinone. Couples the redox reaction to proton translocation (for every two electrons transferred, four hydrogen ions are translocated across the cytoplasmic membrane), and thus conserves the redox energy in a proton gradient. The polypeptide is NADH-quinone oxidoreductase subunit N (Hydrogenovibrio crunogenus (strain DSM 25203 / XCL-2) (Thiomicrospira crunogena)).